A 441-amino-acid chain; its full sequence is Enolase (441 aa).

Gln164 is a binding site for (2R)-2-phosphoglycerate. Glu206 serves as the catalytic Proton donor. The Mg(2+) site is built by Asp243, Glu289, and Asp316. (2R)-2-phosphoglycerate-binding residues include Lys341, Arg370, Ser371, and Lys392. Lys341 (proton acceptor) is an active-site residue.

It belongs to the enolase family. Mg(2+) serves as cofactor.

It is found in the cytoplasm. The protein localises to the secreted. It localises to the cell surface. The catalysed reaction is (2R)-2-phosphoglycerate = phosphoenolpyruvate + H2O. The protein operates within carbohydrate degradation; glycolysis; pyruvate from D-glyceraldehyde 3-phosphate: step 4/5. Catalyzes the reversible conversion of 2-phosphoglycerate (2-PG) into phosphoenolpyruvate (PEP). It is essential for the degradation of carbohydrates via glycolysis. The polypeptide is Enolase (Leuconostoc mesenteroides subsp. mesenteroides (strain ATCC 8293 / DSM 20343 / BCRC 11652 / CCM 1803 / JCM 6124 / NCDO 523 / NBRC 100496 / NCIMB 8023 / NCTC 12954 / NRRL B-1118 / 37Y)).